A 464-amino-acid polypeptide reads, in one-letter code: Probable glycine dehydrogenase (decarboxylating) subunit 1 (464 aa).

It belongs to the GcvP family. N-terminal subunit subfamily. In terms of assembly, the glycine cleavage system is composed of four proteins: P, T, L and H. In this organism, the P 'protein' is a heterodimer of two subunits.

The enzyme catalyses N(6)-[(R)-lipoyl]-L-lysyl-[glycine-cleavage complex H protein] + glycine + H(+) = N(6)-[(R)-S(8)-aminomethyldihydrolipoyl]-L-lysyl-[glycine-cleavage complex H protein] + CO2. The glycine cleavage system catalyzes the degradation of glycine. The P protein binds the alpha-amino group of glycine through its pyridoxal phosphate cofactor; CO(2) is released and the remaining methylamine moiety is then transferred to the lipoamide cofactor of the H protein. In Thiobacillus denitrificans (strain ATCC 25259 / T1), this protein is Probable glycine dehydrogenase (decarboxylating) subunit 1.